Reading from the N-terminus, the 885-residue chain is DNA polymerase eta (885 aa).

One can recognise a UmuC domain in the interval 18 to 274 (VLLVDMDCFF…LPVGKIKGLG (257 aa)). Mg(2+) contacts are provided by Asp22 and Met23. Mn(2+) contacts are provided by Asp22 and Met23. An a 2'-deoxyribonucleoside 5'-triphosphate-binding site is contributed by Arg70. 2 residues coordinate Mg(2+): Asp125 and Glu126. Mn(2+) contacts are provided by Asp125 and Glu126. Glu126 is a catalytic residue. 2 disordered regions span residues 599–653 (AIEA…DLYV) and 658–677 (VPPT…RKFD). The span at 608-618 (FEEDTEEETEL) shows a compositional bias: acidic residues. Over residues 628-649 (EGQSSDAGQEQDPNTLNDSTGN) the composition is skewed to polar residues. Residues 701–737 (DILPTIKCDQCGANIPDEVKSLQTHRDHHFAQELSRT) form a UBZ3-type 1 zinc finger. Residues Cys708, Cys711, His725, and His729 each contribute to the Zn(2+) site. Residues 722–783 (LQTHRDHHFA…YSTAPPSNSI (62 aa)) form a disordered region. The segment covering 739 to 748 (RSTEREERTQ) has biased composition (basic and acidic residues). The span at 766-780 (TAGSGSSSYSTAPPS) shows a compositional bias: low complexity. Residues 798-832 (SDPQMNQCPECKAFIKCVDMPEHLDYHVARNLQRE) form a UBZ3-type 2 zinc finger. The Zn(2+) site is built by Cys805, Cys808, His820, and His824. The tract at residues 846 to 870 (NKEKISPVQPKKQSQKKLNSTISAS) is disordered.

This sequence belongs to the DNA polymerase type-Y family. As to quaternary structure, interacts (via C-terminus) with nopo. The cofactor is Mg(2+). Mn(2+) is required as a cofactor. Post-translationally, ubiquitination enhanced by nopo. Expressed in ovaries and testes.

It is found in the nucleus. The enzyme catalyses DNA(n) + a 2'-deoxyribonucleoside 5'-triphosphate = DNA(n+1) + diphosphate. The enzyme in complex with the DNA substrate binds a third divalent metal cation. This binding is essential for catalyzing the DNA synthesis. In terms of biological role, DNA polymerase specifically involved in the DNA repair by translesion synthesis (TLS). Plays an important role in translesion synthesis, where the normal high-fidelity DNA polymerases cannot proceed and DNA synthesis stalls. Inserts one or 2 nucleotide(s) opposite the lesion. During homologous recombination (HR) repair, has a overlapping role with the error-prone translesion polymerase PolZ1/DNApol-zeta to initiate repair synthesis that is completed by end joining or another polymerase that can bind and reinitiate synthesis. Particularly important for the repair of UV-induced pyrimidine dimers and for hydroxyurea (HU)-induced DNA damage. Although inserts the correct base, may cause base transitions and transversions depending upon the context. Forms a Schiff base with 5'-deoxyribose phosphate at abasic sites, but does not have any lyase activity, preventing the release of the 5'-deoxyribose phosphate (5'-dRP) residue. This covalent trapping of the enzyme by the 5'-dRP residue inhibits its DNA synthetic activity during base excision repair, thereby avoiding high incidence of mutagenesis. The protein is DNA polymerase eta of Drosophila melanogaster (Fruit fly).